A 559-amino-acid polypeptide reads, in one-letter code: Potassium-transporting ATPase potassium-binding subunit (559 aa).

The next 13 helical transmembrane spans lie at 5 to 25 (GFLLIASFLLILLVLAKPLGS), 27 to 47 (LARLIAAVPLPGVAGVERILW), 63 to 83 (LLALLTLNLLGLGILFCLLFW), 132 to 152 (GLTVQNFLSAATGIAVVFALI), 170 to 190 (LVRITLWILFPVALIIALFFI), 253 to 273 (LAQMLAIFLIPAALCFAFGEA), 283 to 303 (LLWAMSFIFVVCVAVVMWAEV), 327 to 347 (FGVLASSLFAVVTTAASCGAV), 356 to 376 (ALGGMVPMWLMQIGEVVFGGV), 379 to 399 (GLYGMLLFVLLAVFIAGLMIG), 416 to 436 (MTALAILVTPMLVLLGSALAM), 484 to 504 (LLAFCMFVGRFGVIIPVMAIA), and 524 to 544 (GALFIGLLIGTVLLVGALTFI).

Belongs to the KdpA family. The system is composed of three essential subunits: KdpA, KdpB and KdpC.

It is found in the cell inner membrane. In terms of biological role, part of the high-affinity ATP-driven potassium transport (or Kdp) system, which catalyzes the hydrolysis of ATP coupled with the electrogenic transport of potassium into the cytoplasm. This subunit binds the periplasmic potassium ions and delivers the ions to the membrane domain of KdpB through an intramembrane tunnel. This is Potassium-transporting ATPase potassium-binding subunit from Salmonella choleraesuis (strain SC-B67).